Consider the following 67-residue polypeptide: Probable cold shock protein A (67 aa).

Residues M1–T66 enclose the CSD domain. An Isoglutamyl lysine isopeptide (Lys-Gln) (interchain with Q-Cter in protein Pup) cross-link involves residue K47.

Its subcellular location is the cytoplasm. The chain is Probable cold shock protein A (cspA) from Mycolicibacterium smegmatis (strain ATCC 700084 / mc(2)155) (Mycobacterium smegmatis).